A 249-amino-acid polypeptide reads, in one-letter code: Enolase-phosphatase E1 (249 aa).

This sequence belongs to the HAD-like hydrolase superfamily. MasA/MtnC family. Monomer. Requires Mg(2+) as cofactor.

It catalyses the reaction 5-methylsulfanyl-2,3-dioxopentyl phosphate + H2O = 1,2-dihydroxy-5-(methylsulfanyl)pent-1-en-3-one + phosphate. Its pathway is amino-acid biosynthesis; L-methionine biosynthesis via salvage pathway; L-methionine from S-methyl-5-thio-alpha-D-ribose 1-phosphate: step 3/6. The protein operates within amino-acid biosynthesis; L-methionine biosynthesis via salvage pathway; L-methionine from S-methyl-5-thio-alpha-D-ribose 1-phosphate: step 4/6. In terms of biological role, bifunctional enzyme that catalyzes the enolization of 2,3-diketo-5-methylthiopentyl-1-phosphate (DK-MTP-1-P) into the intermediate 2-hydroxy-3-keto-5-methylthiopentenyl-1-phosphate (HK-MTPenyl-1-P), which is then dephosphorylated to form the acireductone 1,2-dihydroxy-3-keto-5-methylthiopentene (DHK-MTPene). The protein is Enolase-phosphatase E1 of Synechococcus sp. (strain CC9605).